The primary structure comprises 227 residues: UMP-CMP kinase (227 aa).

35–40 is an ATP binding site; sequence GAGKGT. The tract at residues 55-85 is NMP; the sequence is SAGDLLRAEQHREGSEYGQLIQTCIKEGSIV. Residues arginine 61, 83 to 85, 122 to 125, and glutamine 129 each bind a ribonucleoside 5'-phosphate; these read SIV and GFPR. An LID region spans residues 159–169; it reads ERGKTSGREDD. Arginine 160 contributes to the ATP binding site. A ribonucleoside 5'-phosphate contacts are provided by arginine 166 and arginine 177. Valine 205 contributes to the ATP binding site.

The protein belongs to the adenylate kinase family. UMP-CMP kinase subfamily. In terms of assembly, monomer. The cofactor is Mg(2+).

The protein localises to the cytoplasm. It localises to the nucleus. The catalysed reaction is UMP + ATP = UDP + ADP. Catalyzes the phosphorylation of pyrimidine nucleoside monophosphates at the expense of ATP. Plays an important role in de novo pyrimidine nucleotide biosynthesis. Has preference for UMP and CMP as phosphate acceptors, but can also use AMP and dCMP to a lesser extent. May play a role during the formation of basidiospores in the gill tissue. The chain is UMP-CMP kinase (uck1) from Lentinula edodes (Shiitake mushroom).